A 425-amino-acid chain; its full sequence is Serine--tRNA ligase (425 aa).

231–233 (TAE) is a binding site for L-serine. 262 to 264 (RSE) provides a ligand contact to ATP. Residue E285 coordinates L-serine. ATP is bound at residue 349–352 (EISS). S385 provides a ligand contact to L-serine.

It belongs to the class-II aminoacyl-tRNA synthetase family. Type-1 seryl-tRNA synthetase subfamily. Homodimer. The tRNA molecule binds across the dimer.

Its subcellular location is the cytoplasm. The catalysed reaction is tRNA(Ser) + L-serine + ATP = L-seryl-tRNA(Ser) + AMP + diphosphate + H(+). It carries out the reaction tRNA(Sec) + L-serine + ATP = L-seryl-tRNA(Sec) + AMP + diphosphate + H(+). It participates in aminoacyl-tRNA biosynthesis; selenocysteinyl-tRNA(Sec) biosynthesis; L-seryl-tRNA(Sec) from L-serine and tRNA(Sec): step 1/1. Functionally, catalyzes the attachment of serine to tRNA(Ser). Is also able to aminoacylate tRNA(Sec) with serine, to form the misacylated tRNA L-seryl-tRNA(Sec), which will be further converted into selenocysteinyl-tRNA(Sec). In Bacillus licheniformis (strain ATCC 14580 / DSM 13 / JCM 2505 / CCUG 7422 / NBRC 12200 / NCIMB 9375 / NCTC 10341 / NRRL NRS-1264 / Gibson 46), this protein is Serine--tRNA ligase.